We begin with the raw amino-acid sequence, 211 residues long: Proteasome subunit beta 1 (211 aa).

Residues 1-17 constitute a propeptide, removed in mature form; by autocatalysis; the sequence is MVIMGNELQLENKILKG. The active-site Nucleophile is the T18.

Belongs to the peptidase T1B family. The 20S proteasome core is composed of 14 alpha and 14 beta subunits that assemble into four stacked heptameric rings, resulting in a barrel-shaped structure. The two inner rings, each composed of seven catalytic beta subunits, are sandwiched by two outer rings, each composed of seven alpha subunits. The catalytic chamber with the active sites is on the inside of the barrel. Has a gated structure, the ends of the cylinder being occluded by the N-termini of the alpha-subunits. Is capped at one or both ends by the proteasome regulatory ATPase, PAN.

Its subcellular location is the cytoplasm. It catalyses the reaction Cleavage of peptide bonds with very broad specificity.. The formation of the proteasomal ATPase PAN-20S proteasome complex, via the docking of the C-termini of PAN into the intersubunit pockets in the alpha-rings, triggers opening of the gate for substrate entry. Interconversion between the open-gate and close-gate conformations leads to a dynamic regulation of the 20S proteasome proteolysis activity. Its function is as follows. Component of the proteasome core, a large protease complex with broad specificity involved in protein degradation. The polypeptide is Proteasome subunit beta 1 (Saccharolobus islandicus (strain M.16.27) (Sulfolobus islandicus)).